The following is a 48-amino-acid chain: U-reduvitoxin-Pr5a (48 aa).

Positions 1–19 are cleaved as a signal peptide; sequence MRLFLIFTFIVASLASVYG. Cystine bridges form between cysteine 20/cysteine 34, cysteine 27/cysteine 39, and cysteine 33/cysteine 44.

It belongs to the venom Ptu1-like knottin family. As to expression, expressed by the venom gland.

The protein resides in the secreted. Functionally, binds reversibly and blocks P/Q-type voltage-gated calcium channels (Cav). The polypeptide is U-reduvitoxin-Pr5a (Platymeris rhadamanthus (Red spot assassin bug)).